A 418-amino-acid chain; its full sequence is Putative competence-damage inducible protein (418 aa).

This sequence belongs to the CinA family.

In Streptococcus pneumoniae serotype 19F (strain G54), this protein is Putative competence-damage inducible protein.